Here is a 341-residue protein sequence, read N- to C-terminus: UDP-glucose 4-epimerase (341 aa).

Belongs to the polysaccharide synthase family.

It catalyses the reaction UDP-alpha-D-glucose = UDP-alpha-D-galactose. Functionally, epimerizes UDP-galactose to UDP-glucose. The sequence is that of UDP-glucose 4-epimerase (capD) from Rickettsia akari (strain Hartford).